The chain runs to 181 residues: Thioredoxin-like protein CITRX1, chloroplastic (181 aa).

A disordered region spans residues Met1–Cys20. A chloroplast-targeting transit peptide spans Met1–Arg70. One can recognise a Thioredoxin domain in the interval Glu71–Leu181. Active-site nucleophile residues include Cys104 and Cys107. A disulfide bridge connects residues Cys104 and Cys107.

Belongs to the thioredoxin family. Plant CITRX-type subfamily.

It localises to the plastid. Its subcellular location is the chloroplast. Functionally, probable thiol-disulfide oxidoreductase that may play a role in proper chloroplast development. The polypeptide is Thioredoxin-like protein CITRX1, chloroplastic (Nicotiana benthamiana).